The chain runs to 579 residues: MKREHHYLHPRPEPPSVATGSNRESYLNTGKAKLWEEEVQLDGGMDELLAVLGYKVKSSDMAEVAQKLEQLEEAMCQVQDTGLSHLAFDTVHYNPSDLSTWVESMLTELHPPPTSHLDDSSFLAPAESSTIANVDYEPQLQTSSRIFEESSSSDYDLKAITDSAIYSPRESKRLKASESDTDVFSTSAIGASNFATRPVVLVDSQENGIQLVHALMVCAEAVQQNNLNLAEALVKRIDYLAVSQAGAMRKVATFFAEALARRIYRLCPENPLDRSVLDMLQMHFYESCPYLKFAHFTANQAILEAFEGKKRVHVIDFSMNQGIQWPALIQALALRPSGPPTFRLTGIGPPAPDNSDYLQDVGWKLVKFAETLHVEFEYRGFVANSLADLDASMLELRPSEVESVVVNSVFELHQLLARPGAIEKVLSVVKQMKPEIVTVVEQEANHNGPVFVERFTESLHYYSTLFDSLECSPNSQDKMMSEMYLGKQICNVVACEGADRVERHETLTQWRTRLSSAGFDPIHLGSNAFKQASILLALFGSGEGYRVEENEGSLMLGWHTRPLIATSAWKPGNNPVVAH.

The tract at residues 1 to 25 is disordered; sequence MKREHHYLHPRPEPPSVATGSNRES. The short motif at 46 to 50 is the DELLA motif element; that stretch reads DELLA. The GRAS domain occupies 202 to 570; that stretch reads VDSQENGIQL…RPLIATSAWK (369 aa). Residues 209 to 263 form a leucine repeat I (LRI) region; sequence IQLVHALMVCAEAVQQNNLNLAEALVKRIDYLAVSQAGAMRKVATFFAEALARRI. Positions 281–346 are VHIID; that stretch reads QMHFYESCPY…SGPPTFRLTG (66 aa). The short motif at 312–316 is the VHIID element; it reads VHVID. Residues 360–392 form a leucine repeat II (LRII) region; that stretch reads DVGWKLVKFAETLHVEFEYRGFVANSLADLDAS. Residues 404–491 form a PFYRE region; sequence VVVNSVFELH…EMYLGKQICN (88 aa). The LXXLL motif motif lies at 412 to 416; the sequence is LHQLL. The interval 494–570 is SAW; that stretch reads ACEGADRVER…RPLIATSAWK (77 aa).

It belongs to the GRAS family. DELLA subfamily. In terms of processing, phosphorylated. Ubiquitinated. Upon GA application it is ubiquitinated, leading to its subsequent degradation.

The protein localises to the nucleus. Its function is as follows. Probable transcriptional regulator that acts as a repressor of the gibberellin (GA) signaling pathway. Probably acts by participating in large multiprotein complexes that represses transcription of GA-inducible genes. Upon GA application, it is degraded by the proteasome, allowing the GA signaling pathway. The sequence is that of DELLA protein GAIP (GAIP) from Cucurbita maxima (Pumpkin).